Here is a 63-residue protein sequence, read N- to C-terminus: Large ribosomal subunit protein bL32 (63 aa).

Positions 1-23 (MATPKAKVSKSRRDKRRAQFTAR) are disordered. A compositionally biased stretch (basic residues) spans 7 to 18 (KVSKSRRDKRRA).

This sequence belongs to the bacterial ribosomal protein bL32 family.

This chain is Large ribosomal subunit protein bL32, found in Chlorobium phaeobacteroides (strain BS1).